The following is a 365-amino-acid chain: tRNA(Met) cytidine acetate ligase (365 aa).

Residues 7-20 (IAEF…HKYL), glycine 96, asparagine 152, and arginine 175 each bind ATP.

Belongs to the TmcAL family.

The protein resides in the cytoplasm. The catalysed reaction is cytidine(34) in elongator tRNA(Met) + acetate + ATP = N(4)-acetylcytidine(34) in elongator tRNA(Met) + AMP + diphosphate. Its function is as follows. Catalyzes the formation of N(4)-acetylcytidine (ac(4)C) at the wobble position of elongator tRNA(Met), using acetate and ATP as substrates. First activates an acetate ion to form acetyladenylate (Ac-AMP) and then transfers the acetyl group to tRNA to form ac(4)C34. This chain is tRNA(Met) cytidine acetate ligase, found in Streptococcus pneumoniae (strain 70585).